Consider the following 287-residue polypeptide: Ribosomal RNA small subunit methyltransferase A (287 aa).

S-adenosyl-L-methionine-binding residues include Asn-35, Val-37, Gly-62, Glu-83, Asp-113, and Asn-131.

This sequence belongs to the class I-like SAM-binding methyltransferase superfamily. rRNA adenine N(6)-methyltransferase family. RsmA subfamily.

The protein localises to the cytoplasm. The enzyme catalyses adenosine(1518)/adenosine(1519) in 16S rRNA + 4 S-adenosyl-L-methionine = N(6)-dimethyladenosine(1518)/N(6)-dimethyladenosine(1519) in 16S rRNA + 4 S-adenosyl-L-homocysteine + 4 H(+). Functionally, specifically dimethylates two adjacent adenosines (A1518 and A1519) in the loop of a conserved hairpin near the 3'-end of 16S rRNA in the 30S particle. May play a critical role in biogenesis of 30S subunits. The polypeptide is Ribosomal RNA small subunit methyltransferase A (Thermobifida fusca (strain YX)).